We begin with the raw amino-acid sequence, 280 residues long: Shikimate dehydrogenase (NADP(+)) (280 aa).

Shikimate contacts are provided by residues 20–22 and Thr-67; that span reads TLS. Residue Lys-71 is the Proton acceptor of the active site. Positions 92 and 107 each coordinate shikimate. Residues 131 to 135, 154 to 159, and Leu-224 each bind NADP(+); these read GAGGA and NRTIDK. Tyr-226 provides a ligand contact to shikimate. Gly-247 contributes to the NADP(+) binding site.

The protein belongs to the shikimate dehydrogenase family. Homodimer.

It catalyses the reaction shikimate + NADP(+) = 3-dehydroshikimate + NADPH + H(+). Its pathway is metabolic intermediate biosynthesis; chorismate biosynthesis; chorismate from D-erythrose 4-phosphate and phosphoenolpyruvate: step 4/7. Functionally, involved in the biosynthesis of the chorismate, which leads to the biosynthesis of aromatic amino acids. Catalyzes the reversible NADPH linked reduction of 3-dehydroshikimate (DHSA) to yield shikimate (SA). The sequence is that of Shikimate dehydrogenase (NADP(+)) from Carboxydothermus hydrogenoformans (strain ATCC BAA-161 / DSM 6008 / Z-2901).